Reading from the N-terminus, the 67-residue chain is Protein C' (67 aa).

This sequence belongs to the rhabdoviruses C protein family.

Functionally, seems to stimulates transcription by the viral polymerase. May play a role in viral pathogenesis or transmission by insects vectors. The sequence is that of Protein C' (P) from Vesicular stomatitis Indiana virus (strain 94GUB Central America) (VSIV).